A 363-amino-acid chain; its full sequence is Type-2 angiotensin II receptor (363 aa).

Over 1 to 45 (MKDNFSFAATSRNITSSLPFDNLNATGTNESAFNCSHKPADKHLE) the chain is Extracellular. 5 N-linked (GlcNAc...) asparagine glycosylation sites follow: Asn4, Asn13, Asn24, Asn29, and Asn34. Cystine bridges form between Cys35-Cys290 and Cys117-Cys195. The chain crosses the membrane as a helical span at residues 46 to 70 (AIPVLYYMIFVIGFAVNIVVVSLFC). Over 71-80 (CQKGPKKVSS) the chain is Cytoplasmic. Residues 81–104 (IYIFNLAVADLLLLATLPLWATYY) form a helical membrane-spanning segment. Angiotensin II is bound by residues Tyr103 and Tyr104. The Extracellular segment spans residues 105 to 114 (SYRYDWLFGP). A helical transmembrane segment spans residues 115-140 (VMCKVFGSFLTLNMFASIFFITCMSV). Residues 141-159 (DRYQSVIYPFLSQRRNPWQ) lie on the Cytoplasmic side of the membrane. A helical membrane pass occupies residues 160–181 (ASYVVPLVWCMACLSSLPTFYF). Positions 182, 204, and 215 each coordinate angiotensin II. The Extracellular segment spans residues 182–206 (RDVRTIEYLGVNACIMAFPPEKYAQ). A helical membrane pass occupies residues 207–232 (WSAGIALMKNILGFIIPLIFIATCYF). At 233–257 (GIRKHLLKTNSYGKNRITRDQVLKM) the chain is on the cytoplasmic side. The chain crosses the membrane as a helical span at residues 258–281 (AAAVVLAFIICWLPFHVLTFLDAL). Asp279 serves as a coordination point for angiotensin II. The Extracellular segment spans residues 282–294 (TWMGIINSCEVIA). Residues 295–320 (VIDLALPFAILLGFTNSCVNPFLYCF) traverse the membrane as a helical segment. Asp297 serves as a coordination point for angiotensin II. Residues 321-363 (VGNRFQQKLRSVFRVPITWLQGKRETMSCRKSSSLREMDTFVS) are Cytoplasmic-facing. Positions 324 to 333 (RFQQKLRSVF) are helix VIII. Ser354 carries the post-translational modification Phosphoserine; by PKC.

It belongs to the G-protein coupled receptor 1 family. Interacts with MTUS1. In terms of tissue distribution, abundant expression in fetal tissues, immature brain, skin wound and atretic ovarian follicles.

It is found in the cell membrane. Functionally, receptor for angiotensin II, a vasoconstricting peptide. Signals primarily via a non-canonical G-protein- and beta-arrestin independent pathways. Cooperates with MTUS1 to inhibit ERK2 activation and cell proliferation. The sequence is that of Type-2 angiotensin II receptor from Rattus norvegicus (Rat).